The sequence spans 367 residues: Protein RecA (367 aa).

Position 73–80 (73–80 (GPESSGKT)) interacts with ATP.

The protein belongs to the RecA family.

The protein resides in the cytoplasm. Functionally, can catalyze the hydrolysis of ATP in the presence of single-stranded DNA, the ATP-dependent uptake of single-stranded DNA by duplex DNA, and the ATP-dependent hybridization of homologous single-stranded DNAs. It interacts with LexA causing its activation and leading to its autocatalytic cleavage. The protein is Protein RecA of Delftia acidovorans (strain DSM 14801 / SPH-1).